The sequence spans 877 residues: Transcriptional corepressor SEUSS (877 aa).

Disordered stretches follow at residues 1-42 (MVPS…VSPR) and 272-295 (LKSM…PLRP). Residues 272-292 (LKSMPQQRPQLPQQFQQQNLP) show a composition bias toward low complexity. The segment at 321-563 (PEDNNIEFWR…ETRTGPIESL (243 aa)) is dimerization. The Nuclear localization signal signature appears at 330–344 (RKFVAEYFAPNAKKR). Disordered regions lie at residues 560-599 (IESL…QQQQ), 612-633 (QQTV…LMQG), and 666-753 (GRHQ…NESS). Positions 582–618 (QQASDQLRQQQQQQQQQQQQQQQQQQQQQQQQTVSQN) form a coiled coil. Positions 590–599 (QQQQQQQQQQ) are enriched in low complexity. The segment covering 614–633 (TVSQNTNSDQSSRQVALMQG) has biased composition (polar residues). Composition is skewed to low complexity over residues 688-703 (QSPS…SSQQ) and 711-725 (QSPT…PSQN). A compositionally biased stretch (polar residues) spans 726-741 (GIPSVNHMGSTNSPAM).

Belongs to the adn1/SEU family. As to quaternary structure, forms a corepressor complex with LUG; LUG is the transcription repressor subunit and SEU the specific DNA-binding adapter. Interacts with AGL24-AP1 and SVP-AP1 dimers when complexed to SEU. Interacts with AP1/AGL7 and SEP3/AGL9. Binds to LUH. Expressed in root, leaves, seedlings, vegetative and reproductive shoot apical meristems, seeds, floral meristems and all floral organs.

Its subcellular location is the nucleus. The protein localises to the nucleoplasm. Functionally, DNA-binding adapter subunit of the SEU-LUG transcriptional corepressor of the C class floral homeotic gene AGAMOUS during the early stages of floral meristem development. Is part of the A class cadastral complex that define the boundaries between the A and C class homeotic genes expression and function. Interacts together with APETALA2 and LEUNIG to repress AGAMOUS expression. In association with LUG, regulates petal shape through AGAMOUS-independent mechanisms. Controls cell division during petal development and enable the proper patterning of petal blade vasculature. Required for the proper elaboration of petal polarity along the adaxial/abaxial axis. May act through direct or indirect regulation of PHABULOSA and YAB1 and thus regulate cellular proliferation within the developing petal blade. In association with AINTEGUMENTA (ANT), coordinates patterning cues and cellular proliferation along the three positional axes of the developing gynoecium. Required for the development of the medial ridge and subsequent ovule initiation. This Arabidopsis thaliana (Mouse-ear cress) protein is Transcriptional corepressor SEUSS (SEU).